Consider the following 1498-residue polypeptide: DNA-directed RNA polymerase subunit beta' (1498 aa).

Positions 67, 69, 82, and 85 each coordinate Zn(2+). The Mg(2+) site is built by Asp-499, Asp-501, and Asp-503. Positions 867, 943, 950, and 953 each coordinate Zn(2+).

The protein belongs to the RNA polymerase beta' chain family. In terms of assembly, the RNAP catalytic core consists of 2 alpha, 1 beta, 1 beta' and 1 omega subunit. When a sigma factor is associated with the core the holoenzyme is formed, which can initiate transcription. It depends on Mg(2+) as a cofactor. Zn(2+) is required as a cofactor.

It carries out the reaction RNA(n) + a ribonucleoside 5'-triphosphate = RNA(n+1) + diphosphate. In terms of biological role, DNA-dependent RNA polymerase catalyzes the transcription of DNA into RNA using the four ribonucleoside triphosphates as substrates. The polypeptide is DNA-directed RNA polymerase subunit beta' (Chlorobium phaeobacteroides (strain BS1)).